The sequence spans 542 residues: Glucose-6-phosphate isomerase (542 aa).

Residue E354 is the Proton donor of the active site. Residues H385 and K505 contribute to the active site.

It belongs to the GPI family.

The protein localises to the cytoplasm. It catalyses the reaction alpha-D-glucose 6-phosphate = beta-D-fructose 6-phosphate. It participates in carbohydrate biosynthesis; gluconeogenesis. The protein operates within carbohydrate degradation; glycolysis; D-glyceraldehyde 3-phosphate and glycerone phosphate from D-glucose: step 2/4. In terms of biological role, catalyzes the reversible isomerization of glucose-6-phosphate to fructose-6-phosphate. This Nitrosospira multiformis (strain ATCC 25196 / NCIMB 11849 / C 71) protein is Glucose-6-phosphate isomerase.